Consider the following 198-residue polypeptide: Probable chorismate pyruvate-lyase (198 aa).

Arg-73, Leu-111, and Glu-172 together coordinate substrate.

The protein belongs to the UbiC family.

The protein resides in the cytoplasm. It carries out the reaction chorismate = 4-hydroxybenzoate + pyruvate. The protein operates within cofactor biosynthesis; ubiquinone biosynthesis. Its function is as follows. Removes the pyruvyl group from chorismate, with concomitant aromatization of the ring, to provide 4-hydroxybenzoate (4HB) for the ubiquinone pathway. In Burkholderia lata (strain ATCC 17760 / DSM 23089 / LMG 22485 / NCIMB 9086 / R18194 / 383), this protein is Probable chorismate pyruvate-lyase.